A 76-amino-acid chain; its full sequence is MYSMATGTVKWFNNAKGFGFICPEGEDGDIFAHYSTIQMDGYRTLKAGQQVSYQVEQGPKGYHASCVVPIEGQSAK.

Residues 7–67 (GTVKWFNNAK…GPKGYHASCV (61 aa)) form the CSD domain.

It is found in the cytoplasm. This chain is Cold shock-like protein CspD (cspD), found in Vibrio cholerae serotype O1 (strain ATCC 39315 / El Tor Inaba N16961).